Here is a 286-residue protein sequence, read N- to C-terminus: D-tagatose-1,6-bisphosphate aldolase subunit KbaY (286 aa).

Asp-82 (proton donor) is an active-site residue. The Zn(2+) site is built by His-83 and His-180. Gly-181 is a binding site for dihydroxyacetone phosphate. Zn(2+) is bound at residue His-208. Residues 209–211 (GAS) and 230–233 (NVAT) contribute to the dihydroxyacetone phosphate site.

Belongs to the class II fructose-bisphosphate aldolase family. TagBP aldolase KbaY subfamily. Homotetramer. Forms a complex with KbaZ. It depends on Zn(2+) as a cofactor.

It catalyses the reaction D-tagatofuranose 1,6-bisphosphate = D-glyceraldehyde 3-phosphate + dihydroxyacetone phosphate. It functions in the pathway carbohydrate metabolism; D-tagatose 6-phosphate degradation; D-glyceraldehyde 3-phosphate and glycerone phosphate from D-tagatose 6-phosphate: step 2/2. Catalytic subunit of the tagatose-1,6-bisphosphate aldolase KbaYZ, which catalyzes the reversible aldol condensation of dihydroxyacetone phosphate (DHAP or glycerone-phosphate) with glyceraldehyde 3-phosphate (G3P) to produce tagatose 1,6-bisphosphate (TBP). Requires KbaZ subunit for full activity and stability. Is involved in the catabolism of N-acetylgalactosamine and D-galactosamine. The sequence is that of D-tagatose-1,6-bisphosphate aldolase subunit KbaY (kbaY) from Escherichia coli.